A 2327-amino-acid polypeptide reads, in one-letter code: Pre-mRNA-processing-splicing factor 8 homolog (2327 aa).

Positions 1–14 (MDDTNSNINQSNES) are enriched in polar residues. The segment at 1-20 (MDDTNSNINQSNESQHLEEK) is disordered. Residues 801–1292 (TTVHWLEKRR…KIQTRVKIGL (492 aa)) are reverse transcriptase homology domain. The segment at 1293–1566 (NSKMPNRFPP…TLKISLIQIF (274 aa)) is linker. The segment at 1502-1515 (MKYKKLTHAQRSGL) is important for branch point selection. Residues 1570–1740 (LWQKIHESLV…LRERIRKGLQ (171 aa)) form a restriction endonuclease homology domain region. An involved in interaction with pre-mRNA 5' splice site region spans residues 1657–2023 (GDFDSHDIER…QIAEIEKQKT (367 aa)). The tract at residues 1755–2008 (NFGELFSNKI…ILGMEISAPS (254 aa)) is RNase H homology domain. The MPN domain occupies 2093–2223 (TYVFPKNILK…LTAYHLTPSG (131 aa)).

Part of the U5 snRNP complex and of the U4/U6-U5 tri-snRNP complex.

The protein resides in the nucleus speckle. In terms of biological role, functions as a scaffold that mediates the ordered assembly of spliceosomal proteins and snRNAs. Required for the assembly of the U4/U6-U5 tri-snRNP complex. Functions as a scaffold that positions spliceosomal U2, U5 and U6 snRNAs at splice sites on pre-mRNA substrates, so that splicing can occur. Interacts with both the 5' and the 3' splice site. This Dictyostelium discoideum (Social amoeba) protein is Pre-mRNA-processing-splicing factor 8 homolog (prpf8).